The primary structure comprises 873 residues: Alanine--tRNA ligase (873 aa).

Zn(2+) contacts are provided by H562, H566, C663, and H667.

Belongs to the class-II aminoacyl-tRNA synthetase family. Zn(2+) is required as a cofactor.

The protein resides in the cytoplasm. The catalysed reaction is tRNA(Ala) + L-alanine + ATP = L-alanyl-tRNA(Ala) + AMP + diphosphate. In terms of biological role, catalyzes the attachment of alanine to tRNA(Ala) in a two-step reaction: alanine is first activated by ATP to form Ala-AMP and then transferred to the acceptor end of tRNA(Ala). Also edits incorrectly charged Ser-tRNA(Ala) and Gly-tRNA(Ala) via its editing domain. This Bordetella petrii (strain ATCC BAA-461 / DSM 12804 / CCUG 43448) protein is Alanine--tRNA ligase.